Consider the following 156-residue polypeptide: Putative pre-16S rRNA nuclease (156 aa).

This sequence belongs to the YqgF nuclease family.

The protein localises to the cytoplasm. Functionally, could be a nuclease involved in processing of the 5'-end of pre-16S rRNA. The polypeptide is Putative pre-16S rRNA nuclease (Ehrlichia chaffeensis (strain ATCC CRL-10679 / Arkansas)).